The chain runs to 545 residues: E3 ubiquitin-protein ligase ipaH9.8 (545 aa).

The segment at 1 to 242 is interaction with target proteins; it reads MLPINNNFSL…YHGPRIYFSM (242 aa). 8 LRR repeats span residues 57-77, 78-99, 100-117, 118-139, 140-157, 158-179, 182-203, and 205-228; these read NSDELRLDRLNLSSLPDNLPA, QITLLNVSYNQLTNLPELPVTL, KKLYSASNKLSELPVLPP, ALESLQVQHNELENLPALPDSL, LTMNISYNEIVSLPSLPQ, ALKNLRATRNFLTELPAFSEGN, VVREYFFDRNQISHIPESILNL, and NECSIHISDNPLSSHALQALQRLT. The tract at residues 243 to 250 is linker; that stretch reads SDGQQNTL. An E3 ubiquitin-protein ligase catalytic domain region spans residues 251–545; that stretch reads HRPLADAVTA…SENGSQLHHS (295 aa). The 293-residue stretch at 253–545 folds into the NEL domain; the sequence is PLADAVTAWF…SENGSQLHHS (293 aa). The active-site Glycyl thioester intermediate is Cys-337.

Belongs to the LRR-containing bacterial E3 ligase family. As to quaternary structure, also interacts with human and mouse U2AF1 (U2AF35). Ubiquitinated in the presence of host E1 ubiquitin-activating enzyme, E2 ubiquitin-conjugating enzyme and ubiquitin.

The protein resides in the secreted. The protein localises to the host cytoplasm. It localises to the host nucleus. It carries out the reaction S-ubiquitinyl-[E2 ubiquitin-conjugating enzyme]-L-cysteine + [acceptor protein]-L-lysine = [E2 ubiquitin-conjugating enzyme]-L-cysteine + N(6)-ubiquitinyl-[acceptor protein]-L-lysine.. With respect to regulation, exists in an autoinhibited state in the absence of substrate protein, due to interactions of the leucine-rich repeats with NEL domain. Is activated upon binding to a substrate protein. Effector E3 ubiquitin ligase that interferes with host's ubiquitination pathway and modulates the acute inflammatory responses, thus facilitating bacterial colonization within the host cell. Interacts with IKBKG (NEMO) and TNIP1 (ABIN-1), a ubiquitin-binding adapter protein, which results in TNIP1-dependent 'Lys-27'-linked polyubiquitination of IKBKG. Consequently, polyubiquitinated IKBKG undergoes proteasome-dependent degradation, which perturbs NF-kappa-B activation during bacterial infection. Mediates polyubiquitination of host U2AF1, leading to its proteasomal degradation. Catalyzes 'Lys-48'-linked polyubiquitination and subsequent degradation of a subset of host guanylate-binding proteins (GBP1, GBP2, GBP4 and GBP6), thereby suppressing host cell defense. In contrast, host GBP3 and GBP7 are not ubiquitinated by IpaH9.8. Uses UBE2D2 (UBCH5B) as an E2 ubiquitin-conjugating enzyme. The polypeptide is E3 ubiquitin-protein ligase ipaH9.8 (ipaH9.8) (Shigella boydii serotype 18 (strain CDC 3083-94 / BS512)).